A 591-amino-acid chain; its full sequence is L-fucose isomerase (591 aa).

Active-site proton acceptor residues include glutamate 337 and aspartate 361. Mn(2+)-binding residues include glutamate 337, aspartate 361, and histidine 528.

Belongs to the L-fucose isomerase family. In terms of assembly, homohexamer. Requires Mn(2+) as cofactor.

It is found in the cytoplasm. The catalysed reaction is L-fucose = L-fuculose. Its pathway is carbohydrate degradation; L-fucose degradation; L-lactaldehyde and glycerone phosphate from L-fucose: step 1/3. Its function is as follows. Converts the aldose L-fucose into the corresponding ketose L-fuculose. The sequence is that of L-fucose isomerase from Salmonella typhi.